Here is a 196-residue protein sequence, read N- to C-terminus: uncharacterized protein (196 aa).

Residues 11 to 31 (ICGFLLVILTIGGVLGGVYLV) form a helical membrane-spanning segment.

It is found in the membrane. This is an uncharacterized protein from Mycoplasma genitalium (strain ATCC 33530 / DSM 19775 / NCTC 10195 / G37) (Mycoplasmoides genitalium).